The chain runs to 451 residues: DNA double-strand break repair nuclease NurA (451 aa).

Mn(2+)-binding residues include Asp51 and Asp126.

It belongs to the NurA family. Homodimer. Interacts with HerA. It depends on Mn(2+) as a cofactor.

With respect to regulation, exonuclease activity is stimulated in the presence of HerA. Involved in DNA double-strand break (DSB) repair. Probably acts with HerA to stimulate resection of the 5' strand and produce the long 3' single-strand that is required for RadA loading. Exhibits 5' endonuclease activity and both 5' and 3' exonuclease activities. This Pyrococcus furiosus (strain ATCC 43587 / DSM 3638 / JCM 8422 / Vc1) protein is DNA double-strand break repair nuclease NurA.